A 1359-amino-acid polypeptide reads, in one-letter code: DNA-directed RNA polymerase subunit beta (1359 aa).

It belongs to the RNA polymerase beta chain family. The RNAP catalytic core consists of 2 alpha, 1 beta, 1 beta' and 1 omega subunit. When a sigma factor is associated with the core the holoenzyme is formed, which can initiate transcription.

The catalysed reaction is RNA(n) + a ribonucleoside 5'-triphosphate = RNA(n+1) + diphosphate. DNA-dependent RNA polymerase catalyzes the transcription of DNA into RNA using the four ribonucleoside triphosphates as substrates. The protein is DNA-directed RNA polymerase subunit beta of Nitrosococcus oceani (strain ATCC 19707 / BCRC 17464 / JCM 30415 / NCIMB 11848 / C-107).